We begin with the raw amino-acid sequence, 499 residues long: Maturase K (499 aa).

This sequence belongs to the intron maturase 2 family. MatK subfamily.

It localises to the plastid. It is found in the chloroplast. In terms of biological role, usually encoded in the trnK tRNA gene intron. Probably assists in splicing its own and other chloroplast group II introns. The polypeptide is Maturase K (Camellia sinensis (Tea plant)).